The primary structure comprises 899 residues: UPF0182 protein Mhun_1303 (899 aa).

The next 7 membrane-spanning stretches (helical) occupy residues 6-26 (LLIFIPAAVILLFFLLTDLLS), 39-59 (VFLTILITSAALFVIGTLLFF), 93-113 (VAAGITGLSLSSSWEIILAFL), 136-156 (LPFYTILIQYLLALFVFTLII), 196-216 (FLPQVNCLLFLIFTTLAAFLW), 240-260 (ITIPALTILTVIAFLIGLLFL), and 271-291 (IAYGIGGFFIIAILSAGAGFL).

Belongs to the UPF0182 family.

It localises to the cell membrane. The protein is UPF0182 protein Mhun_1303 of Methanospirillum hungatei JF-1 (strain ATCC 27890 / DSM 864 / NBRC 100397 / JF-1).